The following is a 177-amino-acid chain: Ribonuclease alpha-sarcin (177 aa).

Residues 1–27 form the signal peptide; sequence MVAIKNLVLVALTAVTALAVPSPLEAR. 2 cysteine pairs are disulfide-bonded: cysteine 33-cysteine 175 and cysteine 103-cysteine 159. Residue histidine 77 is part of the active site. The tract at residues 86-119 is disordered; that stretch reads DGKLPKGRTPIKFGKSDCDRPPKHSKDGNGKTDH. Basic and acidic residues predominate over residues 99–119; sequence GKSDCDRPPKHSKDGNGKTDH. The Proton acceptor role is filled by glutamate 123. The active-site Proton donor is the histidine 164.

This sequence belongs to the ribonuclease U2 family.

It localises to the secreted. The enzyme catalyses a 28S rRNA containing guanosine-adenosine pair + H2O = an [RNA fragment]-3'-adenosine-3'-phosphate + a 5'-a hydroxy-guanosine-3'-[RNA fragment].. Alpha-sarcin is specific for purines in both single- and double-stranded RNA. Its toxic action on eukaryotic cells is the result of cleavage of a single phosphodiester bond in the 60S subunit of ribosomes. Inhibits both the EFl (elongation factor 1)-dependent binding of aminoacyl-tRNA and the GTP-dependent binding of EF2 (elongation factor 2) to ribosomes. The sequence is that of Ribonuclease alpha-sarcin (sar) from Aspergillus giganteus.